Consider the following 314-residue polypeptide: RNA 2',3'-cyclic phosphodiesterase (314 aa).

Residue histidine 43 is the Proton donor of the active site. 2 consecutive short sequence motifs (HXTX) follow at residues 43–46 (HITL) and 129–132 (HITI). Catalysis depends on histidine 129, which acts as the Proton acceptor.

The protein belongs to the 2H phosphoesterase superfamily. ThpR family.

The catalysed reaction is a 3'-end 2',3'-cyclophospho-ribonucleotide-RNA + H2O = a 3'-end 2'-phospho-ribonucleotide-RNA + H(+). Hydrolyzes RNA 2',3'-cyclic phosphodiester to an RNA 2'-phosphomonoester. This is RNA 2',3'-cyclic phosphodiesterase from Geobacillus stearothermophilus (Bacillus stearothermophilus).